The sequence spans 592 residues: Aspartate--tRNA ligase (592 aa).

Glutamate 171 serves as a coordination point for L-aspartate. The segment at 195–198 (QLFK) is aspartate. Arginine 217 lines the L-aspartate pocket. ATP-binding positions include 217-219 (RDE) and glutamine 226. Histidine 448 is a binding site for L-aspartate. An ATP-binding site is contributed by glutamate 482. Arginine 489 serves as a coordination point for L-aspartate. An ATP-binding site is contributed by 534 to 537 (GLDR).

Belongs to the class-II aminoacyl-tRNA synthetase family. Type 1 subfamily. As to quaternary structure, homodimer.

The protein resides in the cytoplasm. The enzyme catalyses tRNA(Asp) + L-aspartate + ATP = L-aspartyl-tRNA(Asp) + AMP + diphosphate. In terms of biological role, catalyzes the attachment of L-aspartate to tRNA(Asp) in a two-step reaction: L-aspartate is first activated by ATP to form Asp-AMP and then transferred to the acceptor end of tRNA(Asp). The polypeptide is Aspartate--tRNA ligase (Vibrio vulnificus (strain YJ016)).